The chain runs to 437 residues: GTPase Obg (437 aa).

The region spanning 2-160 is the Obg domain; the sequence is SMFLDTAKIS…RQLELELKIL (159 aa). The 178-residue stretch at 161 to 338 folds into the OBG-type G domain; the sequence is ADVGLVGFPS…LLEATAELLA (178 aa). Residues 167 to 174, 192 to 196, 214 to 217, 284 to 287, and 319 to 321 each bind GTP; these read GFPSVGKS, FTTIV, DLPG, NKMD, and SSL. Ser-174 and Thr-194 together coordinate Mg(2+). In terms of domain architecture, OCT spans 359–437; that stretch reads GFAETEKNFE…IGKFEFEFVD (79 aa).

Belongs to the TRAFAC class OBG-HflX-like GTPase superfamily. OBG GTPase family. Monomer. Requires Mg(2+) as cofactor.

The protein resides in the cytoplasm. An essential GTPase which binds GTP, GDP and possibly (p)ppGpp with moderate affinity, with high nucleotide exchange rates and a fairly low GTP hydrolysis rate. Plays a role in control of the cell cycle, stress response, ribosome biogenesis and in those bacteria that undergo differentiation, in morphogenesis control. This Streptococcus pyogenes serotype M49 (strain NZ131) protein is GTPase Obg.